The following is a 102-amino-acid chain: Omega-hexatoxin-Hi2b (102 aa).

Positions 1 to 23 are cleaved as a signal peptide; that stretch reads MKFSKLSLTLALILTQAIFVLCG. Positions 24–56 are excised as a propeptide; the sequence is KINEDFMENGLESHALHDEIRKPIDTEKADAER. 3 disulfide bridges follow: C61–C75, C68–C81, and C74–C86. L98 carries the post-translational modification Leucine amide. A propeptide spanning residues 100-102 is cleaved from the precursor; that stretch reads RAL.

The protein belongs to the neurotoxin 15 family. 02 (omega-actx) subfamily. Expressed by the venom gland.

The protein localises to the secreted. Potent inhibitor of insect, but not mammalian, voltage-gated calcium channels (Cav). In Hadronyche infensa (Fraser island funnel-web spider), this protein is Omega-hexatoxin-Hi2b.